The primary structure comprises 130 residues: uncharacterized protein (130 aa).

This is an uncharacterized protein from Saccharomyces cerevisiae (strain ATCC 204508 / S288c) (Baker's yeast).